Here is a 571-residue protein sequence, read N- to C-terminus: Phosphomethylpyrimidine synthase (571 aa).

Substrate-binding positions include Asn-201, Met-230, Tyr-259, His-295, 315–317, 356–359, and Glu-395; these read SRG and DALR. His-399 lines the Zn(2+) pocket. Tyr-422 provides a ligand contact to substrate. His-463 lines the Zn(2+) pocket. Cys-545, Cys-548, and Cys-553 together coordinate [4Fe-4S] cluster.

The protein belongs to the ThiC family. Requires [4Fe-4S] cluster as cofactor.

The enzyme catalyses 5-amino-1-(5-phospho-beta-D-ribosyl)imidazole + S-adenosyl-L-methionine = 4-amino-2-methyl-5-(phosphooxymethyl)pyrimidine + CO + 5'-deoxyadenosine + formate + L-methionine + 3 H(+). Its pathway is cofactor biosynthesis; thiamine diphosphate biosynthesis. Catalyzes the synthesis of the hydroxymethylpyrimidine phosphate (HMP-P) moiety of thiamine from aminoimidazole ribotide (AIR) in a radical S-adenosyl-L-methionine (SAM)-dependent reaction. The protein is Phosphomethylpyrimidine synthase of Chlorobium phaeovibrioides (strain DSM 265 / 1930) (Prosthecochloris vibrioformis (strain DSM 265)).